The sequence spans 347 residues: Eukaryotic translation initiation factor 3 subunit I (347 aa).

WD repeat units follow at residues Gly8–Thr47, Gly50–Thr89, Thr91–Glu135, Glu151–Ser190, Leu193–Ser232, and Gly290–Lys329.

Belongs to the eIF-3 subunit I family. As to quaternary structure, component of the eukaryotic translation initiation factor 3 (eIF-3) complex.

The protein resides in the cytoplasm. Its function is as follows. Component of the eukaryotic translation initiation factor 3 (eIF-3) complex, which is involved in protein synthesis of a specialized repertoire of mRNAs and, together with other initiation factors, stimulates binding of mRNA and methionyl-tRNAi to the 40S ribosome. The eIF-3 complex specifically targets and initiates translation of a subset of mRNAs involved in cell proliferation. In Vanderwaltozyma polyspora (strain ATCC 22028 / DSM 70294 / BCRC 21397 / CBS 2163 / NBRC 10782 / NRRL Y-8283 / UCD 57-17) (Kluyveromyces polysporus), this protein is Eukaryotic translation initiation factor 3 subunit I.